The primary structure comprises 88 residues: Small ribosomal subunit protein bS20 (88 aa).

This sequence belongs to the bacterial ribosomal protein bS20 family. In terms of assembly, part of the 30S ribosomal subunit.

Binds directly to 16S ribosomal RNA. In Bacillus subtilis (strain 168), this protein is Small ribosomal subunit protein bS20 (rpsT).